A 333-amino-acid polypeptide reads, in one-letter code: tRNA N6-adenosine threonylcarbamoyltransferase (333 aa).

Residues His-108 and His-112 each contribute to the Fe cation site. Substrate contacts are provided by residues 129–133, Asp-161, Glu-178, and Ser-258; that span reads LVSGG. Asp-286 is a Fe cation binding site.

Belongs to the KAE1 / TsaD family. The cofactor is Fe(2+).

The protein localises to the cytoplasm. It carries out the reaction L-threonylcarbamoyladenylate + adenosine(37) in tRNA = N(6)-L-threonylcarbamoyladenosine(37) in tRNA + AMP + H(+). In terms of biological role, required for the formation of a threonylcarbamoyl group on adenosine at position 37 (t(6)A37) in tRNAs that read codons beginning with adenine. Is probably involved in the transfer of the threonylcarbamoyl moiety of threonylcarbamoyl-AMP (TC-AMP) to the N6 group of A37. The sequence is that of tRNA N6-adenosine threonylcarbamoyltransferase from Pyrobaculum islandicum (strain DSM 4184 / JCM 9189 / GEO3).